Here is an 830-residue protein sequence, read N- to C-terminus: ABC transporter G family member STR (830 aa).

Residues Met1–Pro551 lie on the Cytoplasmic side of the membrane. One can recognise an ABC transporter domain in the interval Leu46–Asp297. ATP is bound at residue Gly90–Ser97. 3 disordered regions span residues Asp333 to Lys356, Ser368 to Ser422, and Ser471 to Pro491. The segment covering Ser368–Gln378 has biased composition (polar residues). A compositionally biased stretch (acidic residues) spans Asp395–Phe405. A compositionally biased stretch (low complexity) spans Ser471 to Thr483. A helical membrane pass occupies residues Glu552 to Phe572. Over Lys573 to Asn588 the chain is Extracellular. The chain crosses the membrane as a helical span at residues Phe589–Ile609. The Cytoplasmic portion of the chain corresponds to Gln610–Val630. Residues Ile631–Ile651 form a helical membrane-spanning segment. At Thr652–Ser661 the chain is on the extracellular side. The N-linked (GlcNAc...) asparagine glycan is linked to Asn659. The helical transmembrane segment at Ile662–Leu682 threads the bilayer. Residues Val683–Tyr690 lie on the Cytoplasmic side of the membrane. Residues Ile691–Phe711 form a helical membrane-spanning segment. Residues Leu712–Asn798 lie on the Extracellular side of the membrane. N-linked (GlcNAc...) asparagine glycosylation is found at Asn771 and Asn780. A helical membrane pass occupies residues Ile799 to Val819. The Cytoplasmic segment spans residues Val820 to Lys830.

Belongs to the ABC transporter superfamily. ABCG family. Stunted arbuscule (STR) subfamily. Heterodimerizes with STR2; the resulting transporter is located in the peri-arbuscular membrane.

Its subcellular location is the cell membrane. In terms of biological role, together with STR2, required for arbuscule development in arbuscular mycorrhizal (AM) symbiosis. The chain is ABC transporter G family member STR from Petunia hybrida (Petunia).